Consider the following 186-residue polypeptide: ADP-ribosylation factor-like protein alp41 (186 aa).

G2 carries N-myristoyl glycine lipidation. GTP is bound by residues 23 to 30 (GLDNAGKT), 66 to 70 (DIGGQ), and 125 to 128 (NKSD).

Belongs to the small GTPase superfamily. Arf family.

Its subcellular location is the cytoplasm. The protein resides in the cytoskeleton. In terms of biological role, has a role in the cofactor-dependent pathway of microtubule biogenesis. Required for growth polarity control. The sequence is that of ADP-ribosylation factor-like protein alp41 (alp41) from Schizosaccharomyces pombe (strain 972 / ATCC 24843) (Fission yeast).